The following is a 469-amino-acid chain: Crinkler effector protein 1 (469 aa).

The N-terminal stretch at methionine 1–alanine 17 is a signal peptide. The interval phenylalanine 18–proline 57 is LQLFLAK-like domain. The DWL domain stretch occupies residues isoleucine 58 to isoleucine 96. N-linked (GlcNAc...) asparagine glycosylation occurs at asparagine 68. Residues histidine 97–proline 103 carry the HVLVXXP motif motif. N-linked (GlcNAc...) asparagine glycans are attached at residues asparagine 126, asparagine 181, and asparagine 248.

It belongs to the Crinkler effector family. Homodimer.

It localises to the secreted. The protein resides in the host nucleus. Effector that participates in the arbuscule development step of the symbiosis. Arbuscular mycorrhizal (AM) symbiosis is one of the most prominent and beneficial plant-microbe interactions that facilitates mineral nutrition and confers tolerance to biotic and abiotic stresses. Is not involved in cell death processes. This chain is Crinkler effector protein 1, found in Rhizophagus irregularis (strain DAOM 181602 / DAOM 197198 / MUCL 43194) (Arbuscular mycorrhizal fungus).